The sequence spans 956 residues: MAM domain-containing glycosylphosphatidylinositol anchor protein 2 (956 aa).

The first 25 residues, 1–25, serve as a signal peptide directing secretion; it reads MDLLYGLVWLLTVLLEGISGQGVYA. Ig-like domains lie at 27–127 and 134–232; these read PTVR…IRVD and PVVT…KMVS. Intrachain disulfides connect Cys-62–Cys-110 and Cys-159–Cys-216. Residues Asn-92, Asn-213, and Asn-237 are each glycosylated (N-linked (GlcNAc...) asparagine). Ig-like domains lie at 242 to 328, 340 to 436, 442 to 533, and 540 to 627; these read PSIK…NIIV, PDPY…VNIS, PNLT…ALVQ, and PAVE…FLVT. 2 disulfides stabilise this stretch: Cys-264–Cys-310 and Cys-359–Cys-417. N-linked (GlcNAc...) asparagine glycans are attached at residues Asn-434, Asn-443, Asn-504, Asn-610, and Asn-703. Cystine bridges form between Cys-465–Cys-515 and Cys-561–Cys-611. Positions 638-739 constitute a Fibronectin type-III domain; the sequence is DTYNPVWQNR…IRVIKYSAPV (102 aa). In terms of domain architecture, MAM spans 746–921; it reads FHCGFEDGNI…VSIAEGECAK (176 aa). Asp-931 carries GPI-anchor amidated aspartate lipidation. Residues 932 to 956 constitute a propeptide, removed in mature form; it reads GAVGILVHIWLFPIIVLISILSPRR.

Interacts (through the Ig-like domains) with NLGN2. As to expression, detected in Leydig cells, syncytiotrophoblast, duodenal villi epithelial cells and neutrophils from kidney and cutaneous squamous cell carcinoma (at protein level).

Its subcellular location is the cell membrane. In terms of biological role, may be involved in cell-cell interactions. The chain is MAM domain-containing glycosylphosphatidylinositol anchor protein 2 (MDGA2) from Homo sapiens (Human).